We begin with the raw amino-acid sequence, 49 residues long: Soritesidine (49 aa).

The protein localises to the secreted. Very potent toxin that exhibits a wide range of toxicities over various organisms and cells including brine shrimp larvae (Artemia salina), sea hare eggs (Aplysia kurodai), mice, and cultured mammalian cells. An SOR-containing fraction cleaves plasmid DNA in a bivalent metal ion dependent manner suggesting genotoxicity of SOR. This Spongosorites sp. (strain QM G324170) (Okinawan marine Sponge) protein is Soritesidine.